The sequence spans 68 residues: MKSNIHPKYEEITVTCSCGNVFKTRSTANRDLHIDLCSECHPFYTGKQRAVSAAGQVEKFRKRYGGGQ.

Zn(2+)-binding residues include Cys-16, Cys-18, Cys-37, and Cys-40.

This sequence belongs to the bacterial ribosomal protein bL31 family. Type A subfamily. Part of the 50S ribosomal subunit. Requires Zn(2+) as cofactor.

Functionally, binds the 23S rRNA. This chain is Large ribosomal subunit protein bL31, found in Acidithiobacillus ferrooxidans (strain ATCC 23270 / DSM 14882 / CIP 104768 / NCIMB 8455) (Ferrobacillus ferrooxidans (strain ATCC 23270)).